Here is a 705-residue protein sequence, read N- to C-terminus: Elongation factor G (705 aa).

Residues 8 to 290 (ERYRNFGIMA…GVVHLLPSPA (283 aa)) form the tr-type G domain. Residues 17 to 24 (AHIDAGKT), 88 to 92 (DTPGH), and 142 to 145 (NKMD) each bind GTP. The disordered stretch occupies residues 290–309 (ADRPPVQGIDENEKEDTRDA).

Belongs to the TRAFAC class translation factor GTPase superfamily. Classic translation factor GTPase family. EF-G/EF-2 subfamily.

The protein localises to the cytoplasm. Catalyzes the GTP-dependent ribosomal translocation step during translation elongation. During this step, the ribosome changes from the pre-translocational (PRE) to the post-translocational (POST) state as the newly formed A-site-bound peptidyl-tRNA and P-site-bound deacylated tRNA move to the P and E sites, respectively. Catalyzes the coordinated movement of the two tRNA molecules, the mRNA and conformational changes in the ribosome. The sequence is that of Elongation factor G from Xanthomonas campestris pv. campestris (strain 8004).